Here is a 731-residue protein sequence, read N- to C-terminus: Wall-associated receptor kinase-like 5 (731 aa).

A signal peptide spans 1–26; it reads MKTKTYRFVCLVASVLTLQLMNGSSA. Residues 27–360 lie on the Extracellular side of the membrane; sequence ATPPPPPNSK…PAKPLVLQGV (334 aa). N37, N43, N73, N96, N124, N137, N236, and N272 each carry an N-linked (GlcNAc...) asparagine glycan. The tract at residues 285–342 is atypical EGF-like; the sequence is CLCEYGYFSEMSYRNCYCSLGFTGNPYLRGGCIDNDDCKGPNICEEGTCVNVPGGYRC. 3 disulfide bridges follow: C287/C300, C322/C333, and C328/C342. A helical membrane pass occupies residues 361-381; the sequence is LLGLMGLLFLVVGTLGLIIFI. Topologically, residues 382 to 731 are cytoplasmic; the sequence is KKRRRIISSR…EDQVMEISRE (350 aa). Positions 432–705 constitute a Protein kinase domain; sequence FSVKRVLGKG…REASLELERI (274 aa). Residues 438–446 and K460 each bind ATP; that span reads LGKGSQGTV. Y505 bears the Phosphotyrosine mark. D557 serves as the catalytic Proton acceptor. Phosphothreonine is present on residues T591 and T596. Y604 bears the Phosphotyrosine mark. The segment at 709–731 is disordered; sequence PEDLEAHIENDDEEDQVMEISRE.

This sequence belongs to the protein kinase superfamily. Ser/Thr protein kinase family. As to expression, preferentially expressed in roots and flowers.

It localises to the membrane. The catalysed reaction is L-seryl-[protein] + ATP = O-phospho-L-seryl-[protein] + ADP + H(+). The enzyme catalyses L-threonyl-[protein] + ATP = O-phospho-L-threonyl-[protein] + ADP + H(+). In terms of biological role, serine/threonine-protein kinase that may function as a signaling receptor of extracellular matrix component. May be involved in plant's response to pathogen infection. This Arabidopsis thaliana (Mouse-ear cress) protein is Wall-associated receptor kinase-like 5 (WAKL5).